A 364-amino-acid chain; its full sequence is N-acetyl-gamma-glutamyl-phosphate reductase (364 aa).

The active site involves C157.

It belongs to the NAGSA dehydrogenase family. Type 1 subfamily.

The protein resides in the cytoplasm. The enzyme catalyses N-acetyl-L-glutamate 5-semialdehyde + phosphate + NADP(+) = N-acetyl-L-glutamyl 5-phosphate + NADPH + H(+). It participates in amino-acid biosynthesis; L-arginine biosynthesis; N(2)-acetyl-L-ornithine from L-glutamate: step 3/4. Functionally, catalyzes the NADPH-dependent reduction of N-acetyl-5-glutamyl phosphate to yield N-acetyl-L-glutamate 5-semialdehyde. This Bifidobacterium longum (strain NCC 2705) protein is N-acetyl-gamma-glutamyl-phosphate reductase.